The primary structure comprises 304 residues: Probable alpha-L-glutamate ligase 2 (304 aa).

Positions 107–290 (HQLLARKGVG…IAGAIIDYIV (184 aa)) constitute an ATP-grasp domain. Residues K144, 181 to 182 (EF), D190, and 214 to 216 (RSN) each bind ATP. The Mg(2+) site is built by D251, E263, and N265. Residues D251, E263, and N265 each contribute to the Mn(2+) site.

Belongs to the RimK family. Requires Mg(2+) as cofactor. The cofactor is Mn(2+).

In Hahella chejuensis (strain KCTC 2396), this protein is Probable alpha-L-glutamate ligase 2.